The following is a 1706-amino-acid chain: Bifunctional hemolysin/adenylate cyclase (1706 aa).

Residues 1-399 (MQQSHQAGYA…RRPSLGAVER (399 aa)) are a, catalytic. An ATP-binding site is contributed by 349–356 (AYGVAGKS). A disordered region spans residues 383 to 405 (VPASPGLRRPSLGAVERQDSGYD). The segment at 400 to 912 (QDSGYDSLDG…LKHSIKLDVI (513 aa)) is b, Ala/Gly-rich. A required for interaction with CyaC region spans residues 500–698 (LSAAVFGLGE…SVVGAPVAVV (199 aa)). 2 N6-palmitoyl lysine lipidation sites follow: Lys-860 and Lys-983. The c stretch occupies residues 913 to 1656 (GGDGDDVVLA…RDADHRVEII (744 aa)). 17 Hemolysin-type calcium-binding repeats span residues 1014–1031 (IGGA…DNFL), 1032–1049 (AGGS…NDTL), 1050–1067 (VGGE…DDVF), 1155–1172 (WGHD…DDIL), 1173–1190 (RGGL…NDIF), 1279–1296 (MGQG…DDLL), 1297–1314 (FGGD…NDTL), 1315–1332 (YGGL…NDWF), 1335–1352 (TQAR…VDTV), 1411–1428 (TGDA…ADVL), 1429–1446 (AGGE…DDQL), 1447–1464 (SGDA…DDWF), 1468–1484 (AANA…RDTV), 1537–1554 (IGDA…NDVL), 1555–1572 (SGGA…SDLL), 1573–1590 (SGDA…DDTY), and 1603–1620 (ESGG…ADQL). The tract at residues 1657–1706 (HAANQAVDQAGIEKLVEAMAQYPDPGAAAAAPPAARVPDTLMQSLAVNWR) is d, Asp/Gly-rich.

In the N-terminal section; belongs to the adenylyl cyclase class-2 family. This sequence in the C-terminal section; belongs to the RTX prokaryotic toxin family. In terms of processing, released in a processed form. Palmitoylated at Lys-860 and Lys-983 by CyaC. The toxin only becomes active when modified in position Lys-983: palmitoylation is required for efficient membrane insertion and pore formation of the acylated Hemolysin chain.

It is found in the secreted. Its subcellular location is the host cell membrane. It carries out the reaction ATP = 3',5'-cyclic AMP + diphosphate. Activated by host calmodulin. Functionally, bifunctional adenylate cyclase toxin-hemolysin that plays a crucial role in host colonization. It causes whooping cough by acting on mammalian cells by elevating cAMP-concentration and thus disrupts normal cell function. In terms of biological role, adenylate cyclase that is activated by host intracellular calmodulin and catalyzes un-regulated conversion of ATP to cAMP, thereby impairing microbicidal functions of immune effector cells and inducing apoptosis of lung macrophages. Hemolysin that forms small cation-selective membrane channels, leading to hemolytic activity. The hemolytic activity of CyaA is weak compared with that of the HlyA of E.coli. This is Bifunctional hemolysin/adenylate cyclase (cya) from Bordetella pertussis (strain Tohama I / ATCC BAA-589 / NCTC 13251).